The primary structure comprises 276 residues: Halorhodopsin (276 aa).

The propeptide occupies 1 to 21 (MTAVSTTATTVLQATQSDVLQ). Residues 22–25 (EIQS) lie on the Extracellular side of the membrane. A helical transmembrane segment spans residues 26 to 51 (NFLLNSSIWVNIALAGVVILLFVAMG). The Cytoplasmic segment spans residues 52–57 (RDLESP). Residues 58–81 (RAKLIWVATMLVPLVSISSYAGLA) form a helical membrane-spanning segment. The Extracellular portion of the chain corresponds to 82-105 (SGLTVGFLQMPPGHALAGQEVLSP). Residues 106–127 (WGRYLTWTFSTPMILLALGLLA) traverse the membrane as a helical segment. At 128–130 (DTD) the chain is on the cytoplasmic side. A helical transmembrane segment spans residues 131–154 (IASLFTAITMDIGMCVTGLAAALI). Over 155 to 157 (TSS) the chain is Extracellular. Residues 158–180 (HLLRWVFYGISCAFFVAVLYVLL) form a helical membrane-spanning segment. Residues 181–192 (VQWPADAEAAGT) lie on the Cytoplasmic side of the membrane. The chain crosses the membrane as a helical span at residues 193–216 (SEIFGTLKILTVVLWLGYPILWAL). Topologically, residues 217-225 (GSEGVALLS) are extracellular. The helical transmembrane segment at 226–254 (VGVTSWGYSGLDILAKYVFAFLLLRWVAA) threads the bilayer. Position 241 is an N6-(retinylidene)lysine (Lys-241). Over 255-276 (NEGTVSGSGMGIGSGGAAPADD) the chain is Cytoplasmic.

The protein belongs to the archaeal/bacterial/fungal opsin family.

Its subcellular location is the cell membrane. Functionally, light-driven anion pump. This chain is Halorhodopsin, found in Halobacterium halobium (strain shark).